The chain runs to 279 residues: Large ribosomal subunit protein uL2 (279 aa).

The segment at 227-279 (GVAMNPVDHPMGGGEGKTSGGRHPVSPWGFPTKGKKTRDPNKLSSKFIKSKKR) is disordered.

The protein belongs to the universal ribosomal protein uL2 family. As to quaternary structure, part of the 50S ribosomal subunit. Forms a bridge to the 30S subunit in the 70S ribosome.

Functionally, one of the primary rRNA binding proteins. Required for association of the 30S and 50S subunits to form the 70S ribosome, for tRNA binding and peptide bond formation. It has been suggested to have peptidyltransferase activity; this is somewhat controversial. Makes several contacts with the 16S rRNA in the 70S ribosome. In Neorickettsia sennetsu (strain ATCC VR-367 / Miyayama) (Ehrlichia sennetsu), this protein is Large ribosomal subunit protein uL2.